Consider the following 259-residue polypeptide: (3R)-3-hydroxyacyl-CoA dehydrogenase (259 aa).

Residues 13–21 (LVTGAGSGI) and 40–41 (DL) contribute to the NAD(+) site. Serine 58 carries the phosphoserine modification. At lysine 66 the chain carries N6-acetyllysine. 72-74 (ADV) is an NAD(+) binding site. Serine 154 provides a ligand contact to substrate. At lysine 158 the chain carries N6-succinyllysine. Catalysis depends on tyrosine 167, which acts as the Proton acceptor. NAD(+)-binding positions include 167–171 (YASSK) and 200–202 (IAT). Position 171 is an N6-succinyllysine (lysine 171).

The protein belongs to the short-chain dehydrogenases/reductases (SDR) family. In terms of assembly, heterotetramer with CBR4; contains two molecules of HSD17B8 and CBR4. As to expression, kidney, liver, testis, ovary and spleen. Oviduct, uterus, mammary gland, vagina, prostate, clitoral gland and moderately heart, dorsal skin, brain and lung.

Its subcellular location is the mitochondrion matrix. It catalyses the reaction a (3R)-3-hydroxyacyl-CoA + NAD(+) = a 3-oxoacyl-CoA + NADH + H(+). The catalysed reaction is 17beta-estradiol + NAD(+) = estrone + NADH + H(+). The enzyme catalyses testosterone + NAD(+) = androst-4-ene-3,17-dione + NADH + H(+). It carries out the reaction 17beta-hydroxy-5alpha-androstan-3-one + NAD(+) = 5alpha-androstan-3,17-dione + NADH + H(+). The protein operates within lipid metabolism; fatty acid biosynthesis. Its pathway is steroid biosynthesis; estrogen biosynthesis. It functions in the pathway lipid metabolism; mitochondrial fatty acid beta-oxidation. Its function is as follows. Required for the solubility and assembly of the heterotetramer 3-ketoacyl-[acyl carrier protein] (ACP) reductase functional complex (KAR or KAR1) that forms part of the mitochondrial fatty acid synthase (mtFAS). Alpha-subunit of the KAR complex, acts as scaffold protein, required for the stability of carbonyl reductase type-4 (CBR4, beta-subunit of the KAR complex) and for its 3-ketoacyl-ACP reductase activity, thereby participating in mitochondrial fatty acid biosynthesis. Catalyzes the NAD-dependent conversion of (3R)-3-hydroxyacyl-CoA into 3-ketoacyl-CoA (3-oxoacyl-CoA) with no chain length preference, this enzymatic activity is not needed for the KAR function. Prefers (3R)-3-hydroxyacyl-CoA over (3S)-3-hydroxyacyl-CoA and displays enzymatic activity only in the presence of NAD(+)(H). Cooperates with enoyl-CoA hydratase 1 in mitochondria, together they constitute an alternative route to the auxiliary enzyme pathways for the breakdown of Z-PUFA (cis polyunsaturated fatty acid) enoyl-esters. NAD-dependent 17-beta-hydroxysteroid dehydrogenase with highest activity towards estradiol. It efficiently catalyzes the oxidation of estradiol (E2), testosterone, and dihydrotestosterone. Primarily an oxidative enzyme, it can switch to a reductive mode determined in the appropriate physiologic milieu and catalyze the reduction of estrone (E1) to form biologically active estradiol (E2). The protein is (3R)-3-hydroxyacyl-CoA dehydrogenase (Hsd17b8) of Mus musculus (Mouse).